The primary structure comprises 490 residues: Homoserine O-acetyltransferase (490 aa).

Residues 48–354 form the AB hydrolase-1 domain; that stretch reads NVILVCHALT…NSEYGHDAFL (307 aa). The active-site Nucleophile is the S153. A substrate-binding site is contributed by R223. Residues D317 and H350 contribute to the active site. A substrate-binding site is contributed by D351. CBS domains follow at residues 377-434 and 438-490; these read MSHT…ANSI and MTKN…LYEK.

Belongs to the AB hydrolase superfamily. MetX family. Homodimer.

It is found in the cytoplasm. The catalysed reaction is L-homoserine + acetyl-CoA = O-acetyl-L-homoserine + CoA. The protein operates within amino-acid biosynthesis; L-methionine biosynthesis via de novo pathway; O-acetyl-L-homoserine from L-homoserine: step 1/1. Transfers an acetyl group from acetyl-CoA to L-homoserine, forming acetyl-L-homoserine. This is Homoserine O-acetyltransferase from Methanosphaera stadtmanae (strain ATCC 43021 / DSM 3091 / JCM 11832 / MCB-3).